The sequence spans 229 residues: UPF0758 protein Mbar_A2303 (229 aa).

In terms of domain architecture, MPN spans 106-228 (KVCSPKDVYT…YVSLKDEGFV (123 aa)). Histidine 177, histidine 179, and aspartate 190 together coordinate Zn(2+). A JAMM motif motif is present at residues 177–190 (HNHPSGDPSPSRED).

It belongs to the UPF0758 family.

This Methanosarcina barkeri (strain Fusaro / DSM 804) protein is UPF0758 protein Mbar_A2303.